The sequence spans 620 residues: 1-deoxy-D-xylulose-5-phosphate synthase (620 aa).

Residues His75 and Ala116 to Ser118 each bind thiamine diphosphate. Asp147 lines the Mg(2+) pocket. Residues Gly148 to Ala149, Asn177, Tyr284, and Glu366 each bind thiamine diphosphate. Asn177 provides a ligand contact to Mg(2+).

It belongs to the transketolase family. DXPS subfamily. As to quaternary structure, homodimer. Mg(2+) is required as a cofactor. It depends on thiamine diphosphate as a cofactor.

The enzyme catalyses D-glyceraldehyde 3-phosphate + pyruvate + H(+) = 1-deoxy-D-xylulose 5-phosphate + CO2. Its pathway is metabolic intermediate biosynthesis; 1-deoxy-D-xylulose 5-phosphate biosynthesis; 1-deoxy-D-xylulose 5-phosphate from D-glyceraldehyde 3-phosphate and pyruvate: step 1/1. Functionally, catalyzes the acyloin condensation reaction between C atoms 2 and 3 of pyruvate and glyceraldehyde 3-phosphate to yield 1-deoxy-D-xylulose-5-phosphate (DXP). The sequence is that of 1-deoxy-D-xylulose-5-phosphate synthase from Bordetella bronchiseptica (strain ATCC BAA-588 / NCTC 13252 / RB50) (Alcaligenes bronchisepticus).